The sequence spans 420 residues: Innexin-3 (420 aa).

4 helical membrane-spanning segments follow: residues 33-53 (ATLL…GSAI), 104-124 (WVPI…WIWS), 193-213 (MLYI…FIIL), and 278-298 (IYLF…INTL). Positions 378 to 405 (NRDFHHGHSTKSTSPGLEEGHHEHLYTP) are disordered. The segment covering 395–405 (EEGHHEHLYTP) has biased composition (basic and acidic residues).

The protein belongs to the pannexin family. As to quaternary structure, interacts with F-actin. In terms of tissue distribution, evenly distributed along the adjoining membranes of the two pm5 pharyngeal muscle cells.

The protein localises to the cell membrane. It localises to the cell junction. The protein resides in the gap junction. In terms of biological role, structural component of gap junctions. Plays a role in maintaining gap junction activity to promote phayngeal muscle contraction. This chain is Innexin-3, found in Caenorhabditis elegans.